Consider the following 338-residue polypeptide: Citramalyl-CoA lyase, mitochondrial (338 aa).

Residues 1–20 constitute a mitochondrion transit peptide; it reads MALCVLQNAVRGAAALPRLK. Residues Tyr-48, Lys-55, and Lys-59 each contribute to the substrate site. An N6-acetyllysine mark is found at Lys-55, Lys-59, and Lys-64. N6-acetyllysine; alternate is present on residues Lys-80 and Lys-90. N6-succinyllysine; alternate occurs at positions 80 and 90. Arg-105 is a substrate binding site. Residues Glu-169 and Asp-204 each contribute to the Mg(2+) site. Position 270–271 (270–271) interacts with substrate; it reads IH. An N6-succinyllysine modification is found at Lys-307. The active site involves Asp-318.

This sequence belongs to the HpcH/HpaI aldolase family. Citrate lyase beta subunit-like subfamily. In terms of assembly, homotrimer. Requires Mg(2+) as cofactor.

It localises to the mitochondrion. It catalyses the reaction glyoxylate + acetyl-CoA + H2O = (S)-malate + CoA + H(+). It carries out the reaction propanoyl-CoA + glyoxylate + H2O = 3-methylmalate + CoA + H(+). The catalysed reaction is (3S)-citramalyl-CoA = pyruvate + acetyl-CoA. The enzyme catalyses (S)-malyl-CoA + H2O = (S)-malate + CoA + H(+). Mitochondrial citramalyl-CoA lyase indirectly involved in the vitamin B12 metabolism. Converts citramalyl-CoA into acetyl-CoA and pyruvate in the C5-dicarboxylate catabolism pathway. The C5-dicarboxylate catabolism pathway is required to detoxify itaconate, a vitamin B12-poisoning metabolite. Also acts as a malate synthase in vitro, converting glyoxylate and acetyl-CoA to malate. Also displays malyl-CoA thioesterase activity. Also acts as a beta-methylmalate synthase in vitro, by mediating conversion of glyoxylate and propionyl-CoA to beta-methylmalate. Also has very weak citramalate synthase activity in vitro. This is Citramalyl-CoA lyase, mitochondrial (Clybl) from Rattus norvegicus (Rat).